Consider the following 206-residue polypeptide: Large ribosomal subunit protein uL4 (206 aa).

Positions Gly-47 to Arg-79 are disordered. Residues Gly-69 to Arg-79 are compositionally biased toward low complexity.

It belongs to the universal ribosomal protein uL4 family. Part of the 50S ribosomal subunit.

Functionally, one of the primary rRNA binding proteins, this protein initially binds near the 5'-end of the 23S rRNA. It is important during the early stages of 50S assembly. It makes multiple contacts with different domains of the 23S rRNA in the assembled 50S subunit and ribosome. Forms part of the polypeptide exit tunnel. This Hydrogenovibrio crunogenus (strain DSM 25203 / XCL-2) (Thiomicrospira crunogena) protein is Large ribosomal subunit protein uL4.